The sequence spans 143 residues: 3-hydroxyacyl-[acyl-carrier-protein] dehydratase FabZ (143 aa).

Residue histidine 49 is part of the active site.

This sequence belongs to the thioester dehydratase family. FabZ subfamily.

It localises to the cytoplasm. It carries out the reaction a (3R)-hydroxyacyl-[ACP] = a (2E)-enoyl-[ACP] + H2O. Its function is as follows. Involved in unsaturated fatty acids biosynthesis. Catalyzes the dehydration of short chain beta-hydroxyacyl-ACPs and long chain saturated and unsaturated beta-hydroxyacyl-ACPs. This is 3-hydroxyacyl-[acyl-carrier-protein] dehydratase FabZ from Wolbachia sp. subsp. Drosophila simulans (strain wRi).